The sequence spans 308 residues: Methionine synthase (308 aa).

4 residues coordinate Zn(2+): His-201, Cys-203, Glu-224, and Cys-285.

The protein belongs to the archaeal MetE family. The cofactor is Zn(2+).

Its pathway is amino-acid biosynthesis; L-methionine biosynthesis via de novo pathway. Functionally, catalyzes the transfer of a methyl group to L-homocysteine resulting in methionine formation. Can use methylcobalamin and methylcobinamide as methyl donors, but methylcobalamin is not considered to be the physiological substrate. The polypeptide is Methionine synthase (Methanothermobacter thermautotrophicus (strain ATCC 29096 / DSM 1053 / JCM 10044 / NBRC 100330 / Delta H) (Methanobacterium thermoautotrophicum)).